The following is a 340-amino-acid chain: Methionine import ATP-binding protein MetN 2 (340 aa).

Positions 2–241 (ITLQNVVKEY…PQEKVTQRFV (240 aa)) constitute an ABC transporter domain. 38-45 (GYSGAGKS) provides a ligand contact to ATP.

Belongs to the ABC transporter superfamily. Methionine importer (TC 3.A.1.24) family. The complex is composed of two ATP-binding proteins (MetN), two transmembrane proteins (MetI) and a solute-binding protein (MetQ).

The protein localises to the cell membrane. It carries out the reaction L-methionine(out) + ATP + H2O = L-methionine(in) + ADP + phosphate + H(+). The catalysed reaction is D-methionine(out) + ATP + H2O = D-methionine(in) + ADP + phosphate + H(+). Part of the ABC transporter complex MetNIQ involved in methionine import. Responsible for energy coupling to the transport system. This chain is Methionine import ATP-binding protein MetN 2, found in Listeria monocytogenes serotype 4b (strain F2365).